The chain runs to 353 residues: Ferredoxin--NADP reductase (353 aa).

The FAD site is built by Thr25, Glu44, Gln52, Tyr57, Val97, Phe132, Asp298, and Ser339.

This sequence belongs to the ferredoxin--NADP reductase type 2 family. As to quaternary structure, homodimer. FAD is required as a cofactor.

It carries out the reaction 2 reduced [2Fe-2S]-[ferredoxin] + NADP(+) + H(+) = 2 oxidized [2Fe-2S]-[ferredoxin] + NADPH. The protein is Ferredoxin--NADP reductase of Chlorobium chlorochromatii (strain CaD3).